Consider the following 324-residue polypeptide: NAD kinase (324 aa).

D89 (proton acceptor) is an active-site residue. Residues 89-90 (DG), R94, 163-164 (NE), D193, and 204-209 (TAYAFS) contribute to the NAD(+) site.

This sequence belongs to the NAD kinase family. It depends on a divalent metal cation as a cofactor.

It is found in the cytoplasm. The catalysed reaction is NAD(+) + ATP = ADP + NADP(+) + H(+). Involved in the regulation of the intracellular balance of NAD and NADP, and is a key enzyme in the biosynthesis of NADP. Catalyzes specifically the phosphorylation on 2'-hydroxyl of the adenosine moiety of NAD to yield NADP. The sequence is that of NAD kinase from Nocardia farcinica (strain IFM 10152).